A 35-amino-acid chain; its full sequence is Cupiennin-2e (35 aa).

Glutamate 35 is subject to Glutamic acid 1-amide.

Expressed by the venom gland.

It localises to the secreted. In Cupiennius salei (American wandering spider), this protein is Cupiennin-2e.